The chain runs to 289 residues: NAD kinase (289 aa).

The active-site Proton acceptor is the D68. Residues 68–69, K73, 142–143, R153, D172, 183–188, and Q243 contribute to the NAD(+) site; these read DG, ND, and TAYSLS.

The protein belongs to the NAD kinase family. The cofactor is a divalent metal cation.

It is found in the cytoplasm. It catalyses the reaction NAD(+) + ATP = ADP + NADP(+) + H(+). Its function is as follows. Involved in the regulation of the intracellular balance of NAD and NADP, and is a key enzyme in the biosynthesis of NADP. Catalyzes specifically the phosphorylation on 2'-hydroxyl of the adenosine moiety of NAD to yield NADP. This chain is NAD kinase, found in Acetivibrio thermocellus (strain ATCC 27405 / DSM 1237 / JCM 9322 / NBRC 103400 / NCIMB 10682 / NRRL B-4536 / VPI 7372) (Clostridium thermocellum).